The following is a 1052-amino-acid chain: Error-prone DNA polymerase (1052 aa).

The protein belongs to the DNA polymerase type-C family. DnaE2 subfamily.

It is found in the cytoplasm. The catalysed reaction is DNA(n) + a 2'-deoxyribonucleoside 5'-triphosphate = DNA(n+1) + diphosphate. Functionally, DNA polymerase involved in damage-induced mutagenesis and translesion synthesis (TLS). It is not the major replicative DNA polymerase. The protein is Error-prone DNA polymerase of Bordetella parapertussis (strain 12822 / ATCC BAA-587 / NCTC 13253).